Reading from the N-terminus, the 702-residue chain is Polyribonucleotide nucleotidyltransferase (702 aa).

Asp485 and Asp491 together coordinate Mg(2+). A KH domain is found at 552–612 (PRTEIICIDP…EGVKKAISII (61 aa)). An S1 motif domain is found at 622-690 (GEIYLGKVTK…NQGRINLSRK (69 aa)).

It belongs to the polyribonucleotide nucleotidyltransferase family. It depends on Mg(2+) as a cofactor.

The protein localises to the cytoplasm. The enzyme catalyses RNA(n+1) + phosphate = RNA(n) + a ribonucleoside 5'-diphosphate. Involved in mRNA degradation. Catalyzes the phosphorolysis of single-stranded polyribonucleotides processively in the 3'- to 5'-direction. This is Polyribonucleotide nucleotidyltransferase from Clostridium botulinum (strain Loch Maree / Type A3).